The chain runs to 219 residues: Ras-related protein Rab-3D (219 aa).

An N-acetylalanine modification is found at A2. 29-37 (GNSSVGKTS) is a GDP binding site. The GTP site is built by S31, S32, V33, G34, K35, T36, S37, P49, and S53. T36 contacts Mg(2+). A Switch 1 motif is present at residues 49–58 (PAFVSTVGID). Mg(2+) contacts are provided by T54 and D77. G80 serves as a coordination point for GTP. The Switch 2 signature appears at 80-96 (GQERYRTITTAYYRGAM). T86 is subject to Phosphothreonine; by LRRK2. N135, K136, D138, A166, and K167 together coordinate GTP. GDP is bound by residues 135–138 (NKCD) and 165–167 (SAK). S190 carries the post-translational modification Phosphoserine. The span at 190–199 (SLEPSSSSGS) shows a compositional bias: low complexity. Residues 190 to 219 (SLEPSSSSGSNGKGPAVGDAPAPQPSSCSC) form a disordered region. 2 S-geranylgeranyl cysteine lipidation sites follow: C217 and C219. A Cysteine methyl ester modification is found at C219.

This sequence belongs to the small GTPase superfamily. Rab family. In terms of assembly, interacts with RIMS1, RIMS2, RPH3A, RPH3AL and RAB3IP. The GTP-bound form interacts with REP15. Interacts with CHM and CHML; phosphorylation at Thr-86 disrupts these interactions. Interacts with MADD (via uDENN domain); the GTP-bound form is preferred for interaction. Mg(2+) serves as cofactor. Post-translationally, phosphorylation of Thr-86 in the switch II region by LRRK2 prevents the association of RAB regulatory proteins, including CHM and CHML. Highly expressed in granulocytes of peripheral blood. Constitutively expressed at low levels in all hematopoietic cell lines investigated.

It is found in the cell membrane. The enzyme catalyses GTP + H2O = GDP + phosphate + H(+). Its activity is regulated as follows. Regulated by guanine nucleotide exchange factors (GEFs) which promote the exchange of bound GDP for free GTP. Regulated by GTPase activating proteins (GAPs) which increase the GTP hydrolysis activity. Inhibited by GDP dissociation inhibitors (GDIs) which prevent Rab-GDP dissociation. In terms of biological role, the small GTPases Rab are key regulators of intracellular membrane trafficking, from the formation of transport vesicles to their fusion with membranes. Rabs cycle between an inactive GDP-bound form and an active GTP-bound form that is able to recruit to membranes different sets of downstream effectors directly responsible for vesicle formation, movement, tethering and fusion. RAB3D may be involved in the insulin-induced exocytosis of GLUT4-containing vesicles in adipocytes. The sequence is that of Ras-related protein Rab-3D from Homo sapiens (Human).